A 497-amino-acid chain; its full sequence is Glutamate--tRNA ligase (497 aa).

The 'HIGH' region signature appears at Pro-12–Asn-22. The 'KMSKS' region motif lies at Lys-259 to Arg-263. Residue Lys-262 participates in ATP binding.

This sequence belongs to the class-I aminoacyl-tRNA synthetase family. Glutamate--tRNA ligase type 1 subfamily. In terms of assembly, monomer.

It is found in the cytoplasm. It carries out the reaction tRNA(Glu) + L-glutamate + ATP = L-glutamyl-tRNA(Glu) + AMP + diphosphate. Functionally, catalyzes the attachment of glutamate to tRNA(Glu) in a two-step reaction: glutamate is first activated by ATP to form Glu-AMP and then transferred to the acceptor end of tRNA(Glu). The chain is Glutamate--tRNA ligase from Lacticaseibacillus casei (strain BL23) (Lactobacillus casei).